The chain runs to 333 residues: 5-formaminoimidazole-4-carboxamide-1-(beta)-D-ribofuranosyl 5'-monophosphate synthetase (333 aa).

Positions 10 and 70 each coordinate 5-amino-1-(5-phospho-beta-D-ribosyl)imidazole-4-carboxamide. Residues 91-324 (KEVLKWESDR…IAREIKIAIE (234 aa)) enclose the ATP-grasp domain. Residues 121–181 (PDDI…VPIY) and E203 each bind ATP. N231 is a binding site for 5-amino-1-(5-phospho-beta-D-ribosyl)imidazole-4-carboxamide. Positions 269 and 282 each coordinate Mg(2+).

Belongs to the phosphohexose mutase family. The cofactor is Mg(2+). Mn(2+) serves as cofactor.

The catalysed reaction is 5-amino-1-(5-phospho-beta-D-ribosyl)imidazole-4-carboxamide + formate + ATP = 5-formamido-1-(5-phospho-D-ribosyl)imidazole-4-carboxamide + ADP + phosphate. Its pathway is purine metabolism; IMP biosynthesis via de novo pathway; 5-formamido-1-(5-phospho-D-ribosyl)imidazole-4-carboxamide from 5-amino-1-(5-phospho-D-ribosyl)imidazole-4-carboxamide (formate route): step 1/1. Catalyzes the ATP- and formate-dependent formylation of 5-aminoimidazole-4-carboxamide-1-beta-d-ribofuranosyl 5'-monophosphate (AICAR) to 5-formaminoimidazole-4-carboxamide-1-beta-d-ribofuranosyl 5'-monophosphate (FAICAR) in the absence of folates. The polypeptide is 5-formaminoimidazole-4-carboxamide-1-(beta)-D-ribofuranosyl 5'-monophosphate synthetase (Pyrococcus horikoshii (strain ATCC 700860 / DSM 12428 / JCM 9974 / NBRC 100139 / OT-3)).